The primary structure comprises 430 residues: Serine--tRNA ligase (430 aa).

An L-serine-binding site is contributed by 237 to 239; the sequence is TAE. 268–270 is a binding site for ATP; the sequence is RAE. Residue glutamate 291 coordinates L-serine. 355–358 lines the ATP pocket; it reads EISS. Serine 391 is a binding site for L-serine.

It belongs to the class-II aminoacyl-tRNA synthetase family. Type-1 seryl-tRNA synthetase subfamily. As to quaternary structure, homodimer. The tRNA molecule binds across the dimer.

Its subcellular location is the cytoplasm. The catalysed reaction is tRNA(Ser) + L-serine + ATP = L-seryl-tRNA(Ser) + AMP + diphosphate + H(+). It catalyses the reaction tRNA(Sec) + L-serine + ATP = L-seryl-tRNA(Sec) + AMP + diphosphate + H(+). The protein operates within aminoacyl-tRNA biosynthesis; selenocysteinyl-tRNA(Sec) biosynthesis; L-seryl-tRNA(Sec) from L-serine and tRNA(Sec): step 1/1. In terms of biological role, catalyzes the attachment of serine to tRNA(Ser). Is also able to aminoacylate tRNA(Sec) with serine, to form the misacylated tRNA L-seryl-tRNA(Sec), which will be further converted into selenocysteinyl-tRNA(Sec). The protein is Serine--tRNA ligase of Serratia proteamaculans (strain 568).